The chain runs to 96 residues: Aspartyl/glutamyl-tRNA(Asn/Gln) amidotransferase subunit C (96 aa).

It belongs to the GatC family. In terms of assembly, heterotrimer of A, B and C subunits.

The catalysed reaction is L-glutamyl-tRNA(Gln) + L-glutamine + ATP + H2O = L-glutaminyl-tRNA(Gln) + L-glutamate + ADP + phosphate + H(+). It catalyses the reaction L-aspartyl-tRNA(Asn) + L-glutamine + ATP + H2O = L-asparaginyl-tRNA(Asn) + L-glutamate + ADP + phosphate + 2 H(+). Its function is as follows. Allows the formation of correctly charged Asn-tRNA(Asn) or Gln-tRNA(Gln) through the transamidation of misacylated Asp-tRNA(Asn) or Glu-tRNA(Gln) in organisms which lack either or both of asparaginyl-tRNA or glutaminyl-tRNA synthetases. The reaction takes place in the presence of glutamine and ATP through an activated phospho-Asp-tRNA(Asn) or phospho-Glu-tRNA(Gln). In Neisseria gonorrhoeae (strain ATCC 700825 / FA 1090), this protein is Aspartyl/glutamyl-tRNA(Asn/Gln) amidotransferase subunit C.